The sequence spans 438 residues: Coenzyme A disulfide reductase (438 aa).

Residue 8-33 (GAVAGGATCASQIRRLDKESDIIIFE) coordinates FAD. 5 residues coordinate substrate: T15, Q19, R22, S39, and N42. C43 functions as the Nucleophile in the catalytic mechanism. C43 serves as the catalytic Redox-active. Substrate is bound at residue K71. 151–166 (VLVVGAGYVSLEVLEN) is a binding site for NADP(+). 267 to 277 (TNVPNIYAIGD) is a binding site for FAD. Residue H299 participates in substrate binding. Position 419 (Y419) interacts with FAD. Substrate is bound at residue K427.

It belongs to the class-III pyridine nucleotide-disulfide oxidoreductase family. As to quaternary structure, homodimer. FAD serves as cofactor.

The catalysed reaction is NADP(+) + 2 CoA = CoA-disulfide + NADPH + H(+). Catalyzes specifically the NADPH-dependent reduction of coenzyme A disulfide. In Staphylococcus aureus (strain bovine RF122 / ET3-1), this protein is Coenzyme A disulfide reductase.